A 154-amino-acid polypeptide reads, in one-letter code: MSASVELSSYRDQHFKGSRSEQERSLRDSCTLYVGNLSFYTTEEQIHELFSRCGDVRVIVMGLDKYKKTPCGFCFVEYYIRSEAEAAMRFVNGTRLDDRLIRVDWDAGFIEGRQYGRGKTGGQVRDEYRTDYDAGRGGYGKLLSQKIAPNTDNR.

Residues tyrosine 10, tyrosine 33, 102 to 106, 113 to 117, and 123 to 124 contribute to the mRNA site; these read RVDWD, RQYGR, and QV. The RRM domain maps to 30 to 108; it reads CTLYVGNLSF…RLIRVDWDAG (79 aa).

Belongs to the RRM NCBP2 family. Component of the nuclear cap-binding complex (CBC), a heterodimer composed of Cbp80 and Cbp20 that interacts with m7GpppG-capped RNA. Interacts with Ars2.

Its subcellular location is the nucleus. Component of the cap-binding complex (CBC), which binds co-transcriptionally to the 5' cap of pre-mRNAs and is involved in various processes such as pre-mRNA splicing and RNA-mediated gene silencing (RNAi). The CBC complex is involved in miRNA-mediated RNA interference via its interaction with Ars2 and is required for primary microRNAs (miRNAs) processing. Also involved in innate immunity via the short interfering RNAs (siRNAs) processing machinery by restricting the viral RNA production. In the CBC complex, Cbp20 recognizes and binds capped RNAs (m7GpppG-capped RNA) but requires Cbp80 to stabilize the movement of its N-terminal loop and lock the CBC into a high affinity cap-binding state with the cap structure. This Drosophila yakuba (Fruit fly) protein is Nuclear cap-binding protein subunit 2 (Cbp20).